Consider the following 507-residue polypeptide: ATP synthase subunit alpha, chloroplastic (507 aa).

170–177 (GDRQTGKT) lines the ATP pocket.

This sequence belongs to the ATPase alpha/beta chains family. F-type ATPases have 2 components, CF(1) - the catalytic core - and CF(0) - the membrane proton channel. CF(1) has five subunits: alpha(3), beta(3), gamma(1), delta(1), epsilon(1). CF(0) has four main subunits: a, b, b' and c.

The protein resides in the plastid. Its subcellular location is the chloroplast thylakoid membrane. The catalysed reaction is ATP + H2O + 4 H(+)(in) = ADP + phosphate + 5 H(+)(out). Functionally, produces ATP from ADP in the presence of a proton gradient across the membrane. The alpha chain is a regulatory subunit. The protein is ATP synthase subunit alpha, chloroplastic of Vitis vinifera (Grape).